The primary structure comprises 148 residues: Arginine repressor (148 aa).

The protein belongs to the ArgR family.

The protein resides in the cytoplasm. Its pathway is amino-acid biosynthesis; L-arginine biosynthesis [regulation]. Its function is as follows. Regulates arginine biosynthesis genes. The polypeptide is Arginine repressor (Prosthecochloris aestuarii (strain DSM 271 / SK 413)).